We begin with the raw amino-acid sequence, 194 residues long: Molybdenum cofactor guanylyltransferase (194 aa).

GTP contacts are provided by residues 12–14, Lys-25, Asn-53, Asp-70, and Asp-100; that span reads LAG. Residue Asp-100 coordinates Mg(2+).

The protein belongs to the MobA family. In terms of assembly, monomer. The cofactor is Mg(2+).

It localises to the cytoplasm. The enzyme catalyses Mo-molybdopterin + GTP + H(+) = Mo-molybdopterin guanine dinucleotide + diphosphate. Functionally, transfers a GMP moiety from GTP to Mo-molybdopterin (Mo-MPT) cofactor (Moco or molybdenum cofactor) to form Mo-molybdopterin guanine dinucleotide (Mo-MGD) cofactor. The polypeptide is Molybdenum cofactor guanylyltransferase (Aliivibrio fischeri (strain MJ11) (Vibrio fischeri)).